The primary structure comprises 206 residues: dTTP/UTP pyrophosphatase (206 aa).

Residue Asp87 is the Proton acceptor of the active site.

This sequence belongs to the Maf family. YhdE subfamily. Requires a divalent metal cation as cofactor.

It is found in the cytoplasm. The catalysed reaction is dTTP + H2O = dTMP + diphosphate + H(+). The enzyme catalyses UTP + H2O = UMP + diphosphate + H(+). Its function is as follows. Nucleoside triphosphate pyrophosphatase that hydrolyzes dTTP and UTP. May have a dual role in cell division arrest and in preventing the incorporation of modified nucleotides into cellular nucleic acids. The sequence is that of dTTP/UTP pyrophosphatase from Aromatoleum aromaticum (strain DSM 19018 / LMG 30748 / EbN1) (Azoarcus sp. (strain EbN1)).